The following is a 115-amino-acid chain: Ig heavy chain V-III region W3082 (115 aa).

The 114-residue stretch at 1-114 (EVKLEESGGG…WGQGTLVTVS (114 aa)) folds into the Ig-like domain. A disulfide bond links cysteine 22 and cysteine 98.

The sequence is that of Ig heavy chain V-III region W3082 from Mus musculus (Mouse).